The chain runs to 746 residues: Histone-lysine N-methyltransferase EZH2 (746 aa).

The interval 1–340 (MGQTGKKSEK…AKEFAAALTA (340 aa)) is interaction with DNMT1, DNMT3A and DNMT3B. Serine 21 is subject to Phosphoserine; by PKB/AKT1. Residues 39 to 68 (KSMFSSNRQKILERTEILNQEWKQRRIQPV) are interaction with EED. O-linked (GlcNAc) serine glycosylation occurs at serine 75. The residue at position 76 (serine 76) is a Phosphoserine. The tract at residues 180–222 (QYNDDDDDDDGDDPEEREEKQKDLEDHRDDKESRPPRKFPSDK) is disordered. Residues 182 to 195 (NDDDDDDDGDDPEE) show a composition bias toward acidic residues. Residues 196-222 (REEKQKDLEDHRDDKESRPPRKFPSDK) show a composition bias toward basic and acidic residues. The tract at residues 329 to 522 (EGAKEFAAAL…SSNHVYNYQP (194 aa)) is interaction with CDYL. Phosphothreonine is present on threonine 339. The disordered stretch occupies residues 340–426 (AERIKTPPKR…PIKMKPNIEP (87 aa)). Position 345 is a phosphothreonine; by CDK1 and CDK2 (threonine 345). The segment covering 345–357 (TPPKRPGGRRRGR) has biased composition (basic residues). A phosphoserine mark is found at serine 363 and serine 366. Threonine 367 bears the Phosphothreonine mark. Residues 374-385 (ESKDTDSDREAG) are compositionally biased toward basic and acidic residues. The residue at position 487 (threonine 487) is a Phosphothreonine. In terms of domain architecture, CXC spans 503–605 (CRKIQLKKDG…SKNVSCKNCS (103 aa)). Positions 612 to 727 (KHLLLAPSDV…TGEELFFDYR (116 aa)) constitute an SET domain. Lysine 634 is covalently cross-linked (Glycyl lysine isopeptide (Lys-Gly) (interchain with G-Cter in SUMO2)).

Belongs to the class V-like SAM-binding methyltransferase superfamily. Histone-lysine methyltransferase family. EZ subfamily. In terms of assembly, component of the PRC2/EED-EZH2 complex, which includes EED, EZH2, SUZ12, RBBP4 and RBBP7 and possibly AEBP2. The minimum components required for methyltransferase activity of the PRC2/EED-EZH2 complex are EED, EZH2 and SUZ12. The PRC2 complex may also interact with DNMT1, DNMT3A, DNMT3B and PHF1 via the EZH2 subunit and with SIRT1 via the SUZ12 subunit. Interacts with HDAC1 and HDAC2. Binds ATRX via the SET domain. Interacts with PRAME. Interacts with CDYL. Interacts with BMAL1, CLOCK and CRY1. Interacts with DNMT3L; the interaction is direct. Interacts with EZHIP; the interaction blocks EZH2 methyltransferase activity. Interacts with ZNF263; recruited to the SIX3 promoter along with other proteins involved in chromatin modification and transcriptional corepression where it contributes to transcriptional repression. Interacts with ARMC12. Interacts with ZMYND8; the interaction is dependent on the presence of chromatin. Interacts with DDX18; this interaction inhibits the PRC2 complex. Phosphorylated by AKT1. Phosphorylation by AKT1 reduces methyltransferase activity. Phosphorylation at Thr-345 by CDK1 and CDK2 promotes maintenance of H3K27me3 levels at EZH2-target loci, thus leading to epigenetic gene silencing. Post-translationally, sumoylated. In terms of processing, glycosylated: O-GlcNAcylation at Ser-75 by OGT increases stability of EZH2 and facilitates the formation of H3K27me3 by the PRC2/EED-EZH2 complex.

The protein resides in the nucleus. It carries out the reaction L-lysyl(27)-[histone H3] + 3 S-adenosyl-L-methionine = N(6),N(6),N(6)-trimethyl-L-lysyl(27)-[histone H3] + 3 S-adenosyl-L-homocysteine + 3 H(+). In terms of biological role, polycomb group (PcG) protein. Catalytic subunit of the PRC2/EED-EZH2 complex, which methylates 'Lys-9' (H3K9me) and 'Lys-27' (H3K27me) of histone H3, leading to transcriptional repression of the affected target gene. Able to mono-, di- and trimethylate 'Lys-27' of histone H3 to form H3K27me1, H3K27me2 and H3K27me3, respectively. Displays a preference for substrates with less methylation, loses activity when progressively more methyl groups are incorporated into H3K27, H3K27me0 &gt; H3K27me1 &gt; H3K27me2. Compared to EZH1-containing complexes, it is more abundant in embryonic stem cells and plays a major role in forming H3K27me3, which is required for embryonic stem cell identity and proper differentiation. The PRC2/EED-EZH2 complex may also serve as a recruiting platform for DNA methyltransferases, thereby linking two epigenetic repression systems. EZH2 can also methylate non-histone proteins such as the transcription factor GATA4 and the nuclear receptor RORA. Regulates the circadian clock via histone methylation at the promoter of the circadian genes. Essential for the CRY1/2-mediated repression of the CLOCK-BMAL1 transcriptional activation of PER1/2. Involved in the di and trimethylation of 'Lys-27' of histone H3 on PER1/2 promoters which is necessary for the CRY1/2 proteins to inhibit transcription. The polypeptide is Histone-lysine N-methyltransferase EZH2 (EZH2) (Macaca fascicularis (Crab-eating macaque)).